Consider the following 146-residue polypeptide: Large ribosomal subunit protein uL15 (146 aa).

Residues 1 to 13 (MKLHELKAAEGSR) show a composition bias toward basic and acidic residues. Positions 1-51 (MKLHELKAAEGSRKVRNRVGRGTSSGNGKTSGRGQKGQKARSGGGVRLGFE) are disordered. Gly residues-rich tracts occupy residues 23 to 35 (TSSG…GRGQ) and 42 to 51 (SGGGVRLGFE).

Belongs to the universal ribosomal protein uL15 family. In terms of assembly, part of the 50S ribosomal subunit.

In terms of biological role, binds to the 23S rRNA. The polypeptide is Large ribosomal subunit protein uL15 (Streptococcus pyogenes serotype M1).